The sequence spans 552 residues: Asparagine--tRNA ligase, cytoplasmic (552 aa).

A disordered region spans residues M1–Q23. Polar residues predominate over residues A12–Q23.

Belongs to the class-II aminoacyl-tRNA synthetase family.

The protein resides in the cytoplasm. It catalyses the reaction tRNA(Asn) + L-asparagine + ATP = L-asparaginyl-tRNA(Asn) + AMP + diphosphate + H(+). This Debaryomyces hansenii (strain ATCC 36239 / CBS 767 / BCRC 21394 / JCM 1990 / NBRC 0083 / IGC 2968) (Yeast) protein is Asparagine--tRNA ligase, cytoplasmic (DED81).